A 137-amino-acid polypeptide reads, in one-letter code: Nucleoside diphosphate kinase (137 aa).

Residues lysine 9, phenylalanine 58, arginine 86, threonine 92, arginine 103, and asparagine 113 each coordinate ATP. The active-site Pros-phosphohistidine intermediate is histidine 121.

The protein belongs to the NDK family. Homotetramer. Mg(2+) is required as a cofactor.

Its subcellular location is the cytoplasm. The enzyme catalyses a 2'-deoxyribonucleoside 5'-diphosphate + ATP = a 2'-deoxyribonucleoside 5'-triphosphate + ADP. The catalysed reaction is a ribonucleoside 5'-diphosphate + ATP = a ribonucleoside 5'-triphosphate + ADP. In terms of biological role, major role in the synthesis of nucleoside triphosphates other than ATP. The ATP gamma phosphate is transferred to the NDP beta phosphate via a ping-pong mechanism, using a phosphorylated active-site intermediate. The protein is Nucleoside diphosphate kinase of Streptococcus pneumoniae (strain Hungary19A-6).